Here is a 1254-residue protein sequence, read N- to C-terminus: MISSGWMQEMEPIPEEGTEADGSEWGAMSDTAKRTMRKKEVYTSEQINTLVSTVPKEAVPQEWLVENQVVDPEMATSYLTESLAGPTSARGSSYSYSYESHYDNPPEEEYEHFTNDDGVHQMQKVTRVTKVTTTRSVRQVPVQSPYSNIDFDSSGLPTPSPVIDRDPSLEMMARMGGASDHDSEDRSAPPPAPASRFLHEDSGIPSAPGVPDVVDAGIGEVTVVWSAPLQSNGGEVRGYQIEMREFPDGEWESMGVDHLLKDTTCRVTNLTSHEVQFRVSAYGRTGFGPASNPSLPVKIPISETDLATSAGAPLAPGRPTVIAVDGQGVLLEWTPPVADVHSSPPQGYQVEYRVYGSRDWIVANEQLVQENVFTVESLRPNGVYEFRVRGKNQDGLGHPSMSSGGVAIRPAAPQRHVPARKVSESVQPPGQPQMVEVGDDVVKLEWAPSVQNARYIVEYREVGDPEWHTANYDPIVQNGIQVEGLHRNSTYEFCVISIVDNIASQPSETSDIIHLRPTCNTSALRPAPNILEAPEFLEVDGDKITICWLPAQSQLPVMGYDVEFRDLQQDDRWYKVNDQPVFACKMTVGDLIMDHDYQFRVLAHNASGCSQPSPPSDFVHIEPSTNRFSSDTMESPHLGHHDVVKYVEAERFGAVPLLQEEMVRESPPLPERDDSPPPLRRANNNVQWRDPSLKEVIEYLSSADKDKQLNASGYLQHLTYTDNQIKEETREYGGIPKLIALLRSDTPRIQKNACACLKNLSFGKENDANKLAVMEADGVRLIAEVLRTTHDASVKEEAAAALWNLSSADMLKPVILESATEILSQQVIAPVLAVGTSDPTRHFGSTLFKNSTGVLRNVSAASQQARRRLRDIPNLIEALVHFLTHAIQKSQVDSPTVENAVCLLRNLSYRIQEVVDPNYDPAAAHSSSSKNMKHVASPKPEKKKKDKEKKKDKNPKNIVTGPSVLWQPHVVKLYLKLLQDSSNIETLEASAGAIQNLAACQFPPSAEVRAAVRVEKGLPVLVELIRLPEDFVVCAVATALRNLAIDPRNRELIGKYALRDFLDKLPEPGSPRRSAISDQTIGAVLGILFEIVRSSAAYTKDVHELKGTDKLRALSRSYPTYSHRVCKYASQVLYVMWQHKELHDGFKRSGLKEADFYSGTARRGDSSTLARPISSQGRERPSMHQLDETLSSGGGYGTMESNNRAGTLRPASATSQTIQRRYDQVPRDGPVYSSVQKPSPRGGGGGGNIDDSWV.

3 disordered regions span residues 1–38 (MISSGWMQEMEPIPEEGTEADGSEWGAMSDTAKRTMRK), 84–106 (AGPTSARGSSYSYSYESHYDNPP), and 145–209 (PYSN…SAPG). Over residues 12–22 (PIPEEGTEADG) the composition is skewed to acidic residues. Polar residues predominate over residues 145–157 (PYSNIDFDSSGLP). Fibronectin type-III domains lie at 207–302 (APGV…IPIS), 315–411 (APGR…IRPA), 428–518 (PPGQ…LRPT), and 530–624 (ILEA…IEPS). The disordered stretch occupies residues 412–433 (APQRHVPARKVSESVQPPGQPQ). Residues 662–685 (MVRESPPLPERDDSPPPLRRANNN) are disordered. ARM repeat units follow at residues 733 to 775 (GGIP…AVME), 777 to 820 (DGVR…ESAT), 874 to 922 (NLIE…YDPA), 969 to 1012 (HVVK…RAAV), and 1016 to 1058 (KGLP…KYAL). Positions 920–960 (DPAAAHSSSSKNMKHVASPKPEKKKKDKEKKKDKNPKNIVT) are disordered. A disordered region spans residues 1159–1254 (GTARRGDSST…GGGNIDDSWV (96 aa)). The span at 1166–1176 (SSTLARPISSQ) shows a compositional bias: polar residues. The span at 1177 to 1187 (GRERPSMHQLD) shows a compositional bias: basic and acidic residues.

The protein belongs to the beta-catenin family. Associated with the catenin-cadherin complex consisting of hmr-1, hmp-1 and hmp-2. Interacts with hmr-1. Interacts with picc-1. Epidermal cells.

Its subcellular location is the cell junction. The protein resides in the adherens junction. It is found in the nucleus. Functionally, may act as a positive modulator of hmr-1 function during epidermal morphogenesis. Required for proper localization of other junctional components, such as pac-1. This Caenorhabditis elegans protein is Juxtamembrane domain-associated catenin (jac-1).